The sequence spans 296 residues: NAD kinase (296 aa).

The Proton acceptor role is filled by Asp-72. Residues 72 to 73, 146 to 147, Arg-157, Lys-174, Asp-176, 187 to 192, and Gln-247 each bind NAD(+); these read DG, ND, and TAYALS.

It belongs to the NAD kinase family. A divalent metal cation serves as cofactor.

It is found in the cytoplasm. The catalysed reaction is NAD(+) + ATP = ADP + NADP(+) + H(+). Its function is as follows. Involved in the regulation of the intracellular balance of NAD and NADP, and is a key enzyme in the biosynthesis of NADP. Catalyzes specifically the phosphorylation on 2'-hydroxyl of the adenosine moiety of NAD to yield NADP. The sequence is that of NAD kinase from Pseudomonas syringae pv. syringae (strain B728a).